Consider the following 121-residue polypeptide: Putative iron-sulfur cluster insertion protein ErpA (121 aa).

Cys49, Cys113, and Cys115 together coordinate iron-sulfur cluster.

This sequence belongs to the HesB/IscA family. Homodimer. It depends on iron-sulfur cluster as a cofactor.

Its function is as follows. Required for insertion of 4Fe-4S clusters. This is Putative iron-sulfur cluster insertion protein ErpA from Paracidovorax citrulli (strain AAC00-1) (Acidovorax citrulli).